A 319-amino-acid polypeptide reads, in one-letter code: Putative peptide permease protein BRA0408/BS1330_II0405 (319 aa).

6 helical membrane-spanning segments follow: residues 9–29, 102–122, 138–158, 182–202, 242–262, and 284–304; these read LLIG…LLQL, LLLM…TGII, LALL…LYVF, LLRH…ALIM, LPVV…AIFI, and YPVI…VNIL. One can recognise an ABC transmembrane type-1 domain in the interval 98–305; that stretch reads IGPTLLLMAA…ACVIIVNILT (208 aa).

Belongs to the binding-protein-dependent transport system permease family. As to quaternary structure, the complex is composed of two ATP-binding proteins (BRA0404 and BRA0405), two transmembrane proteins (BRA0407 and BRA0408) and a solute-binding protein (BRA0409).

It is found in the cell inner membrane. Its function is as follows. Probably part of an ABC transporter complex that could be involved in peptide import. Probably responsible for the translocation of the substrate across the membrane. This is Putative peptide permease protein BRA0408/BS1330_II0405 from Brucella suis biovar 1 (strain 1330).